The chain runs to 63 residues: Large ribosomal subunit protein uL29 (63 aa).

It belongs to the universal ribosomal protein uL29 family.

The polypeptide is Large ribosomal subunit protein uL29 (Pseudomonas fluorescens (strain ATCC BAA-477 / NRRL B-23932 / Pf-5)).